The primary structure comprises 113 residues: uncharacterized protein (113 aa).

The next 3 helical transmembrane spans lie at 9–31 (IFPS…SVIY), 36–58 (VLTI…YKFQ), and 71–90 (IMAL…VVAV).

Its subcellular location is the cell membrane. This is an uncharacterized protein from Archaeoglobus fulgidus (strain ATCC 49558 / DSM 4304 / JCM 9628 / NBRC 100126 / VC-16).